The sequence spans 362 residues: tRNA-specific 2-thiouridylase MnmA (362 aa).

ATP is bound by residues 6 to 13 (AMSGGVDS) and Leu32. Catalysis depends on Cys101, which acts as the Nucleophile. An intrachain disulfide couples Cys101 to Cys197. ATP is bound at residue Gly125. Residues 147-149 (KDQ) are interaction with tRNA. Cys197 acts as the Cysteine persulfide intermediate in catalysis.

The protein belongs to the MnmA/TRMU family.

Its subcellular location is the cytoplasm. The catalysed reaction is S-sulfanyl-L-cysteinyl-[protein] + uridine(34) in tRNA + AH2 + ATP = 2-thiouridine(34) in tRNA + L-cysteinyl-[protein] + A + AMP + diphosphate + H(+). In terms of biological role, catalyzes the 2-thiolation of uridine at the wobble position (U34) of tRNA, leading to the formation of s(2)U34. The chain is tRNA-specific 2-thiouridylase MnmA from Acidothermus cellulolyticus (strain ATCC 43068 / DSM 8971 / 11B).